Reading from the N-terminus, the 391-residue chain is 3-ketoacyl-CoA thiolase (391 aa).

Residue Cys95 is the Acyl-thioester intermediate of the active site. Residues His347 and Cys377 each act as proton acceptor in the active site.

The protein belongs to the thiolase-like superfamily. Thiolase family. As to quaternary structure, heterotetramer of two alpha chains (FadB) and two beta chains (FadA).

Its subcellular location is the cytoplasm. It carries out the reaction an acyl-CoA + acetyl-CoA = a 3-oxoacyl-CoA + CoA. It participates in lipid metabolism; fatty acid beta-oxidation. In terms of biological role, catalyzes the final step of fatty acid oxidation in which acetyl-CoA is released and the CoA ester of a fatty acid two carbons shorter is formed. This chain is 3-ketoacyl-CoA thiolase, found in Pseudomonas putida (Arthrobacter siderocapsulatus).